Reading from the N-terminus, the 903-residue chain is HTH-type transcriptional regulator MalT (903 aa).

39–46 (CPAGYGKT) is an ATP binding site. The HTH luxR-type domain occupies 832-897 (ELIRTSPLTQ…EAVQQAQRLL (66 aa)). Residues 856–875 (NDQIANELDVAATTIKTHIR) constitute a DNA-binding region (H-T-H motif).

This sequence belongs to the MalT family. As to quaternary structure, monomer in solution. Oligomerizes to an active state in the presence of the positive effectors ATP and maltotriose.

With respect to regulation, activated by ATP and maltotriose, which are both required for DNA binding. Its function is as follows. Positively regulates the transcription of the maltose regulon whose gene products are responsible for uptake and catabolism of malto-oligosaccharides. Specifically binds to the promoter region of its target genes, recognizing a short DNA motif called the MalT box. The protein is HTH-type transcriptional regulator MalT of Yersinia pseudotuberculosis serotype O:1b (strain IP 31758).